Reading from the N-terminus, the 97-residue chain is Putative septation protein SpoVG (97 aa).

The protein belongs to the SpoVG family.

Its function is as follows. Essential for sporulation. Interferes with or is a negative regulator of the pathway leading to asymmetric septation. This is Putative septation protein SpoVG from Bacillus cereus (strain 03BB102).